A 608-amino-acid polypeptide reads, in one-letter code: MKNLLSLCFLMLAAFTLNPAAAQEKQSIFDVSNSSLFSNDDEFLKVDQAFAFNFYQKNNLLEVSFDIAPEYYLYRHQFKFKGKNTQFTSVLLPDGIDHEDEFFGVQKIFTENLAFTVNLENVSNDASIKITYQGCAEKGLCYPPTSKVIKLSKFILGESTSAPSSDAAQQTNEGEVKKSEQHQLSDMLKQDSLLLTLIAFFVGGLLLSFTPCVFPMYPILTGIIVGQGEGLTTKKAFTLSFFYVQGMAITYTLLGVVVAMAGAKFQAVFQHPIVLIGLSILFIFLALSMFGVFNLALPASWQNKLNNVSNKQKGGSITGVLMMGVISGLVASPCTTAPLTGALLYISQTGDVVLGASALYALSLGMGLPLLILGSSGGKLLPKAGAWMNIIKNIFGLLLLAVPVFLLERFIPEVASQALWALLILVSASYFYVANQNHAAAQNVQQGKGFWYGLRSLVIFLMLFFGANLAYQLIYPSSNNVTNNAQHASFKQVTSLAQLEDEVKKANMQGKTVMVDLYADWCIACKEFEKYTFVDADVQKALSNSVWLQIDMTEFDSTDNAELVQHYTILGLPSILFFDLQGNELTKQRTTGFMKAAEFSAHVKSIFK.

The first 22 residues, 1–22 (MKNLLSLCFLMLAAFTLNPAAA), serve as a signal peptide directing secretion. A disulfide bridge connects residues Cys135 and Cys141. Over residues 161–173 (SAPSSDAAQQTNE) the composition is skewed to polar residues. The interval 161–180 (SAPSSDAAQQTNEGEVKKSE) is disordered. 8 helical membrane passes run 194–214 (LLTL…PCVF), 241–261 (FFYV…VAMA), 273–293 (IVLI…FGVF), 314–334 (GGSI…ASPC), 352–372 (VVLG…PLLI), 387–407 (WMNI…VFLL), 414–434 (VASQ…FYVA), and 456–476 (SLVI…LIYP). Cys212 and Cys334 are disulfide-bonded. In terms of domain architecture, Thioredoxin spans 469–608 (LAYQLIYPSS…FSAHVKSIFK (140 aa)). Residues Cys522 and Cys525 are joined by a disulfide bond.

It belongs to the thioredoxin family. DsbD subfamily.

The protein resides in the cell inner membrane. The enzyme catalyses [protein]-dithiol + NAD(+) = [protein]-disulfide + NADH + H(+). It carries out the reaction [protein]-dithiol + NADP(+) = [protein]-disulfide + NADPH + H(+). In terms of biological role, required to facilitate the formation of correct disulfide bonds in some periplasmic proteins and for the assembly of the periplasmic c-type cytochromes. Acts by transferring electrons from cytoplasmic thioredoxin to the periplasm. This transfer involves a cascade of disulfide bond formation and reduction steps. The polypeptide is Thiol:disulfide interchange protein DsbD (Colwellia psychrerythraea (strain 34H / ATCC BAA-681) (Vibrio psychroerythus)).